A 442-amino-acid polypeptide reads, in one-letter code: D-aminoacyl-tRNA deacylase (442 aa).

This sequence belongs to the DtdA deacylase family. In terms of assembly, monomer. It depends on Zn(2+) as a cofactor.

The catalysed reaction is a D-aminoacyl-tRNA + H2O = a tRNA + a D-alpha-amino acid + H(+). It carries out the reaction glycyl-tRNA(Ala) + H2O = tRNA(Ala) + glycine + H(+). In terms of biological role, D-aminoacyl-tRNA deacylase with broad substrate specificity. By recycling D-aminoacyl-tRNA to D-amino acids and free tRNA molecules, this enzyme counteracts the toxicity associated with the formation of D-aminoacyl-tRNA entities in vivo. The protein is D-aminoacyl-tRNA deacylase of Methanospirillum hungatei JF-1 (strain ATCC 27890 / DSM 864 / NBRC 100397 / JF-1).